An 828-amino-acid polypeptide reads, in one-letter code: Glycerol-3-phosphate acyltransferase (828 aa).

An HXXXXD motif motif is present at residues 309–314; the sequence is CHRSHI.

Belongs to the GPAT/DAPAT family.

It is found in the cell inner membrane. It carries out the reaction sn-glycerol 3-phosphate + an acyl-CoA = a 1-acyl-sn-glycero-3-phosphate + CoA. It participates in phospholipid metabolism; CDP-diacylglycerol biosynthesis; CDP-diacylglycerol from sn-glycerol 3-phosphate: step 1/3. The sequence is that of Glycerol-3-phosphate acyltransferase from Pseudomonas entomophila (strain L48).